A 581-amino-acid polypeptide reads, in one-letter code: Major facilitator superfamily multidrug transporter NAG4 (581 aa).

Polar residues predominate over residues 1-14 (MSHATDSTLDNASV). Residues 1-43 (MSHATDSTLDNASVDSEKVRDFGDDLQNHPVQPTRSILSKIRS) are disordered. Asn11 carries an N-linked (GlcNAc...) asparagine glycan. Residues 15–27 (DSEKVRDFGDDLQ) are compositionally biased toward basic and acidic residues. An N-linked (GlcNAc...) asparagine glycan is attached at Asn125. The next 12 helical transmembrane spans lie at 132–152 (WLYT…SAIV), 169–189 (VIIL…PLVF), 199–219 (KPIY…CGAA), 230–250 (LIDG…LADI), 261–281 (AIFS…GGLL), 290–310 (WIYW…IAIV), 365–385 (IVFL…MFFF), 403–423 (GVMF…APFF), 447–467 (LIPM…FAWS), 471–491 (WVSW…FCCL), 510–530 (ALAA…LFTI), and 544–564 (LMAF…FFGA).

It belongs to the major facilitator superfamily. DHA1 family. Polyamines/proton antiporter (TC 2.A.1.2.16) subfamily.

The protein resides in the cell membrane. Functionally, MFS transporter involved in N-acetylglucosamine (GlcNAc) uptake. Confers resistance to cycloheximide, 4-nitroquinoline-N-oxide, and 1,10-phenanthroline, and contributes to virulence. The sequence is that of Major facilitator superfamily multidrug transporter NAG4 from Candida albicans (strain SC5314 / ATCC MYA-2876) (Yeast).